We begin with the raw amino-acid sequence, 118 residues long: Large ribosomal subunit protein uL18 (118 aa).

It belongs to the universal ribosomal protein uL18 family. Part of the 50S ribosomal subunit; part of the 5S rRNA/L5/L18/L25 subcomplex. Contacts the 5S and 23S rRNAs.

Its function is as follows. This is one of the proteins that bind and probably mediate the attachment of the 5S RNA into the large ribosomal subunit, where it forms part of the central protuberance. This is Large ribosomal subunit protein uL18 from Limosilactobacillus reuteri (strain DSM 20016) (Lactobacillus reuteri).